The primary structure comprises 301 residues: Putative S-adenosyl-L-methionine-dependent methyltransferase MT0851 (301 aa).

S-adenosyl-L-methionine is bound by residues Asp-127 and 156–157 (DL).

This sequence belongs to the UPF0677 family.

Exhibits S-adenosyl-L-methionine-dependent methyltransferase activity. This chain is Putative S-adenosyl-L-methionine-dependent methyltransferase MT0851, found in Mycobacterium tuberculosis (strain CDC 1551 / Oshkosh).